The chain runs to 684 residues: Protein EXECUTER 1, chloroplastic (684 aa).

Over residues 1-31 (MPSLSTPPSQNLAFSPAASATSSRLTPSSKR) the composition is skewed to polar residues. Residues 1–46 (MPSLSTPPSQNLAFSPAASATSSRLTPSSKRSFYPHRLPDPTALCR) constitute a chloroplast transit peptide. A disordered region spans residues 1 to 66 (MPSLSTPPSQ…SSSSSDDNPR (66 aa)). Residues 48–61 (SSSSGSNSSSSSSS) are compositionally biased toward low complexity. The 36-residue stretch at 127–162 (DRLLSVLKSQLNRAIKREDYEDAARLKVAIAATATN) folds into the UVR domain. Positions 278–318 (TLTPGRFLTSPGRKEDTGNLAVESSEDEESDNSDDDSDLLE) are disordered. Residues 301 to 318 (SSEDEESDNSDDDSDLLE) show a composition bias toward acidic residues.

The protein localises to the plastid. The protein resides in the chloroplast. Functionally, together with EX2, enables higher plants to perceive singlet oxygen as a stress signal in plastid that activates a genetically determined nuclear stress response program which triggers a programmed cell death (PCD). This transfer of singlet oxygen-induced stress-related signals from the plastid to the nucleus that triggers genetically controlled PCD pathway is unique to photosynthetic eukaryotes and operates under mild stress conditions, impeding photosystem II (PSII) without causing photooxidative damage of the plant. This is Protein EXECUTER 1, chloroplastic from Arabidopsis thaliana (Mouse-ear cress).